Reading from the N-terminus, the 178-residue chain is Large ribosomal subunit protein bL17 (178 aa).

2 stretches are compositionally biased toward low complexity: residues 123 to 139 (KAPA…NTAT) and 151 to 160 (EDAAAQAPVA). The disordered stretch occupies residues 123 to 178 (KAPASAADAKAQINTATEAKEAEPEAPAEDAAAQAPVADEQKAAEVDEKAEEKPEA). A compositionally biased stretch (basic and acidic residues) spans 161–178 (DEQKAAEVDEKAEEKPEA).

Belongs to the bacterial ribosomal protein bL17 family. In terms of assembly, part of the 50S ribosomal subunit. Contacts protein L32.

The chain is Large ribosomal subunit protein bL17 from Cutibacterium acnes (strain DSM 16379 / KPA171202) (Propionibacterium acnes).